The primary structure comprises 707 residues: Protein MICRORCHIDIA 7 (707 aa).

Basic and acidic residues-rich tracts occupy residues 1–11 (MDNSIHVKREI) and 575–587 (DNRD…DREG). Disordered regions lie at residues 1-22 (MDNS…AGFP) and 568-619 (EKSA…SGKD). Residues 590–613 (SIKTPTPASDKFYSSSYPNHNGDN) are compositionally biased toward polar residues. Positions 620 to 701 (GARLQEELRR…NKIKKMEGSK (82 aa)) form a coiled coil. Residues 633-640 (RRKALEVE) carry the Nuclear localization signal motif.

The protein belongs to the MORC ATPase protein family. In terms of assembly, homodimer and heterodimer. Component of an RNA-directed DNA methylation (RdDM) complex. Forms homomeric complexes. Requires Mg(2+) as cofactor. The cofactor is Mn(2+).

It localises to the nucleus. Functionally, exhibits ATPase activity. Binds DNA/RNA in a non-specific manner and exhibits endonuclease activity. Probably involved in DNA repair. Involved in RNA-directed DNA methylation (RdDM) as a component of the RdDM machinery and required for gene silencing. May also be involved in the regulation of chromatin architecture to maintain gene silencing. Together with MORC4, acts to suppress a wide set of non-methylated protein-coding genes, especially involved in pathogen response. Positive regulators of defense against the oomycete Hyaloperonospora arabidopsidis (Hpa). This is Protein MICRORCHIDIA 7 from Arabidopsis thaliana (Mouse-ear cress).